Reading from the N-terminus, the 437-residue chain is Enolase (437 aa).

Glutamine 162 serves as a coordination point for (2R)-2-phosphoglycerate. Glutamate 204 functions as the Proton donor in the catalytic mechanism. Mg(2+) contacts are provided by aspartate 251, glutamate 297, and aspartate 324. Lysine 349, arginine 378, serine 379, and lysine 400 together coordinate (2R)-2-phosphoglycerate. Lysine 349 (proton acceptor) is an active-site residue.

Belongs to the enolase family. Mg(2+) serves as cofactor.

Its subcellular location is the cytoplasm. The protein resides in the secreted. It localises to the cell surface. It catalyses the reaction (2R)-2-phosphoglycerate = phosphoenolpyruvate + H2O. It participates in carbohydrate degradation; glycolysis; pyruvate from D-glyceraldehyde 3-phosphate: step 4/5. In terms of biological role, catalyzes the reversible conversion of 2-phosphoglycerate (2-PG) into phosphoenolpyruvate (PEP). It is essential for the degradation of carbohydrates via glycolysis. This Chlorobium limicola (strain DSM 245 / NBRC 103803 / 6330) protein is Enolase.